The following is a 285-amino-acid chain: 4-diphosphocytidyl-2-C-methyl-D-erythritol kinase (285 aa).

Residue Lys-11 is part of the active site. 93-103 (PLAAGLAGGSA) lines the ATP pocket. The active site involves Asp-135.

Belongs to the GHMP kinase family. IspE subfamily.

It carries out the reaction 4-CDP-2-C-methyl-D-erythritol + ATP = 4-CDP-2-C-methyl-D-erythritol 2-phosphate + ADP + H(+). Its pathway is isoprenoid biosynthesis; isopentenyl diphosphate biosynthesis via DXP pathway; isopentenyl diphosphate from 1-deoxy-D-xylulose 5-phosphate: step 3/6. Catalyzes the phosphorylation of the position 2 hydroxy group of 4-diphosphocytidyl-2C-methyl-D-erythritol. The protein is 4-diphosphocytidyl-2-C-methyl-D-erythritol kinase of Moorella thermoacetica (strain ATCC 39073 / JCM 9320).